Here is a 156-residue protein sequence, read N- to C-terminus: Persephin (156 aa).

A signal peptide spans 1 to 21 (MAVGKFLLGSLLLLSLQLGQG). 3 disulfide bridges follow: Cys-66-Cys-124, Cys-93-Cys-152, and Cys-97-Cys-154.

The protein belongs to the TGF-beta family. GDNF subfamily. In terms of assembly, homodimer; disulfide-linked. Interacts with GFRA4 coreceptor and RET: forms a 2:2:2 ternary complex composed of PSPN ligand, GFRA4 and RET receptor.

It localises to the secreted. Growth factor that exhibits neurotrophic activity on mesencephalic dopaminergic and motor neurons. Acts by binding to its coreceptor, GFRA4, leading to autophosphorylation and activation of the RET receptor. This chain is Persephin, found in Homo sapiens (Human).